The following is a 420-amino-acid chain: Glucose-1-phosphate adenylyltransferase (420 aa).

Residues tyrosine 108, glycine 173, 188–189 (EK), and serine 206 each bind alpha-D-glucose 1-phosphate.

Belongs to the bacterial/plant glucose-1-phosphate adenylyltransferase family. As to quaternary structure, homotetramer.

The catalysed reaction is alpha-D-glucose 1-phosphate + ATP + H(+) = ADP-alpha-D-glucose + diphosphate. The protein operates within glycan biosynthesis; glycogen biosynthesis. Involved in the biosynthesis of ADP-glucose, a building block required for the elongation reactions to produce glycogen. Catalyzes the reaction between ATP and alpha-D-glucose 1-phosphate (G1P) to produce pyrophosphate and ADP-Glc. In Paraburkholderia phytofirmans (strain DSM 17436 / LMG 22146 / PsJN) (Burkholderia phytofirmans), this protein is Glucose-1-phosphate adenylyltransferase.